The sequence spans 1977 residues: Echinoderm microtubule-associated protein-like 5 (1977 aa).

WD repeat units lie at residues 59 to 100 (GHSD…TVSV), 104 to 145 (VHTH…MLSM), 148 to 187 (GHTD…LTPK), 195 to 233 (GDLQ…RTIQ), 235 to 273 (AHTA…TVID), 280 to 321 (GYKG…LIMQ), 323 to 362 (HCEG…LIAR), 406 to 445 (DRKE…KKVG), 449 to 488 (GSLS…EVTS), and 561 to 601 (GHSA…KLKD). Residues 609–629 (ESLAESNSDESDSDLSDVPEL) form a disordered region. Acidic residues predominate over residues 615 to 629 (NSDESDSDLSDVPEL). WD repeat units follow at residues 725-766 (GHDD…PLSI), 770-811 (YHQY…KLSV), 814-853 (GSKD…LIGK), 861-900 (GKND…KTVK), 901-940 (AHDG…KTYA), 996-1035 (HMEG…CMLA), 1038-1077 (KLKK…DLVS), 1080-1120 (HRKD…RVGV), and 1236-1276 (AHST…HREK). Disordered stretches follow at residues 1276–1297 (KKYC…YDSD) and 1323–1363 (PHLQ…NVGK). Residues 1281 to 1294 (SEESDIDSEEDGGY) are compositionally biased toward acidic residues. Basic and acidic residues predominate over residues 1326 to 1337 (QQKEPSVDERQG). WD repeat units follow at residues 1420-1471 (EHND…TLSI), 1475-1516 (SHSK…KIAS), 1519-1558 (GHNQ…LLSK), 1568-1606 (ARMQ…RVVA), 1608-1654 (AHNG…RAFR), 1699-1739 (GHVD…MLNK), 1741-1782 (NLGH…GKKR), 1783-1822 (DRRC…TLNR), 1895-1934 (AEKA…KFAK), and 1940-1977 (GHSP…HMPH).

It belongs to the WD repeat EMAP family.

Its subcellular location is the cytoplasm. The protein localises to the cytoskeleton. In terms of biological role, may modify the assembly dynamics of microtubules, such that microtubules are slightly longer, but more dynamic. In Mus musculus (Mouse), this protein is Echinoderm microtubule-associated protein-like 5 (Eml5).